The primary structure comprises 87 residues: Small archaeal modifier protein 1 (87 aa).

At Gly-87 the chain carries 1-thioglycine; alternate. Gly-87 carries the post-translational modification Glycyl adenylate; alternate. Residue Gly-87 forms a Glycyl lysine isopeptide (Gly-Lys) (interchain with K-? in acceptor proteins); alternate linkage.

In terms of processing, the C-terminal glycine is likely acyl-adenylated (-COAMP) by UbaA, and also probably thiocarboxylated (-COSH) to function in sulfur transfer.

Functionally, functions as a protein modifier covalently attached to lysine residues of substrate proteins, as well as a sulfur carrier in molybdenum cofactor (MoCo) biosynthesis. The protein modification process is termed sampylation and involves the formation of an isopeptide bond between the SAMP1 C-terminal glycine carboxylate and the epsilon-amino group of lysine residues on target proteins. May serve as a proteolytic signal in the cell to target proteins for degradation by proteasomes. This is Small archaeal modifier protein 1 (samp1) from Haloferax volcanii (strain ATCC 29605 / DSM 3757 / JCM 8879 / NBRC 14742 / NCIMB 2012 / VKM B-1768 / DS2) (Halobacterium volcanii).